The chain runs to 180 residues: Trafficking protein particle complex subunit 3 (180 aa).

Residue cysteine 68 is the site of S-palmitoyl cysteine attachment.

Belongs to the TRAPP small subunits family. BET3 subfamily. In terms of assembly, homodimer. Component of the multisubunit transport protein particle (TRAPP) complex, which includes at least TRAPPC2, TRAPPC2L, TRAPPC3, TRAPPC3L, TRAPPC4, TRAPPC5, TRAPPC8, TRAPPC9, TRAPPC10, TRAPPC11 and TRAPPC12. Heterodimer with TRAPPC6A. The heterodimer TRAPPC3-TRAPPC6A interacts with TRAPPC2L. Heterodimer with TRAPPC6b. The heterodimer TRAPPC6B-TRAPPC3 interacts with TRAPPC1 likely providing a core for TRAPP complex formation.

The protein localises to the golgi apparatus. The protein resides in the cis-Golgi network. Its subcellular location is the endoplasmic reticulum. In terms of biological role, may play a role in vesicular transport from endoplasmic reticulum to Golgi. This Homo sapiens (Human) protein is Trafficking protein particle complex subunit 3.